Consider the following 526-residue polypeptide: ATP synthase subunit alpha (526 aa).

171–178 (GDRQVGKT) is a binding site for ATP.

It belongs to the ATPase alpha/beta chains family. In terms of assembly, F-type ATPases have 2 components, CF(1) - the catalytic core - and CF(0) - the membrane proton channel. CF(1) has five subunits: alpha(3), beta(3), gamma(1), delta(1), epsilon(1). CF(0) has three main subunits: a(1), b(2) and c(9-12). The alpha and beta chains form an alternating ring which encloses part of the gamma chain. CF(1) is attached to CF(0) by a central stalk formed by the gamma and epsilon chains, while a peripheral stalk is formed by the delta and b chains.

The protein resides in the cell inner membrane. The catalysed reaction is ATP + H2O + 4 H(+)(in) = ADP + phosphate + 5 H(+)(out). Produces ATP from ADP in the presence of a proton gradient across the membrane. The alpha chain is a regulatory subunit. The polypeptide is ATP synthase subunit alpha (Azobacteroides pseudotrichonymphae genomovar. CFP2).